Reading from the N-terminus, the 341-residue chain is Glyceraldehyde-3-phosphate dehydrogenase (341 aa).

NAD(+) contacts are provided by residues 11-12 (TI) and G109. 138–140 (SCN) serves as a coordination point for D-glyceraldehyde 3-phosphate. Catalysis depends on C139, which acts as the Nucleophile. R167 contacts NAD(+). D-glyceraldehyde 3-phosphate is bound by residues T169 and 192–193 (HA). Position 299 (Q299) interacts with NAD(+).

It belongs to the glyceraldehyde-3-phosphate dehydrogenase family. Homotetramer.

It is found in the cytoplasm. The enzyme catalyses D-glyceraldehyde 3-phosphate + phosphate + NADP(+) = (2R)-3-phospho-glyceroyl phosphate + NADPH + H(+). It carries out the reaction D-glyceraldehyde 3-phosphate + phosphate + NAD(+) = (2R)-3-phospho-glyceroyl phosphate + NADH + H(+). It functions in the pathway carbohydrate degradation; glycolysis; pyruvate from D-glyceraldehyde 3-phosphate: step 1/5. In Picrophilus torridus (strain ATCC 700027 / DSM 9790 / JCM 10055 / NBRC 100828 / KAW 2/3), this protein is Glyceraldehyde-3-phosphate dehydrogenase.